Reading from the N-terminus, the 472-residue chain is Ribulose bisphosphate carboxylase/oxygenase activase, chloroplastic (472 aa).

The transit peptide at 1–58 (MATAVSTVGAATRAPLNLNGSSAGASVPTSGFLGSSLKKHTNVRFPSSSRTTSMTVKA) directs the protein to the chloroplast. 163 to 170 (GGKGQGKS) serves as a coordination point for ATP. The disordered stretch occupies residues 448–472 (GCTDPEAKNYDPTARSDDGSCTYNL). Positions 452–465 (PEAKNYDPTARSDD) are enriched in basic and acidic residues.

Belongs to the RuBisCO activase family.

It is found in the plastid. The protein resides in the chloroplast stroma. Functionally, activation of RuBisCO (ribulose-1,5-bisphosphate carboxylase/oxygenase; EC 4.1.1.39) involves the ATP-dependent carboxylation of the epsilon-amino group of lysine leading to a carbamate structure. This Spinacia oleracea (Spinach) protein is Ribulose bisphosphate carboxylase/oxygenase activase, chloroplastic.